The sequence spans 625 residues: MCGLVGYVGQRPACGVVMDALRRMEYRGYDSSGIALINGSAKSGNLTVRRRAGRLSNLESVLAEMVPASLAGNVGLGHIRWATHGRPTDRNAHPHRDATGKIAVVHNGIIENFPSLRHELEIAGVEFVSDTDTEVAVHLVAQAYCAGETAGDFVGSVLAVLRRLQGHFTLVFANADEPGTIVAARRSTPLVLGIGDGEMFVGSDVAAFIEHTRQAVELGQDQAVVITADGYRISDFDGNDDAVNARTFHIDWDLAAAEKGGYEYFMLKEIAEQPDAVVDTLLGHFTGGRIVLDEQRLSDQELREIDKVFVVACGTAYHSGLLAKYTIEHWTRLPVEVELASEFRYRDPVLDRSTLVVAISQSGETADTLEAVRHAKEQKAKVLAICNTNGSQIPRECDAVLYTRAGPEIGVASTKTFLAQVAANYLLGLALAQARGTKYPDEVQREYRELEAMPDLVARVIAGMGPVADLAYRFAQSTTVLFLGRHVGYPVALEGALKLKELAYMHAEGFAAGELKHGPIALIEENLPVIVVMPSPKGSAMLHAKLLSNIREIQTRGAVTIVIAEEGDDTVRLYADHLIELPAVSTLLQPLLSTIPLQVFAASVAQARGYDVDKPRNLAKSVTVE.

Cysteine 2 serves as the catalytic Nucleophile; for GATase activity. The Glutamine amidotransferase type-2 domain occupies cysteine 2 to aspartate 229. SIS domains lie at serine 298–threonine 437 and leucine 470–proline 615. Residue lysine 620 is the For Fru-6P isomerization activity of the active site.

In terms of assembly, homodimer.

Its subcellular location is the cytoplasm. The catalysed reaction is D-fructose 6-phosphate + L-glutamine = D-glucosamine 6-phosphate + L-glutamate. Functionally, catalyzes the first step in hexosamine metabolism, converting fructose-6P into glucosamine-6P using glutamine as a nitrogen source. The protein is Glutamine--fructose-6-phosphate aminotransferase [isomerizing] of Mycobacterium leprae (strain TN).